The sequence spans 391 residues: Probable FAD-dependent oxidoreductase PA4991 (391 aa).

Residues Ala17, Glu36, 44-45, 49-51, and 346-347 each bind FAD; these read QS, QGI, and LA.

Belongs to the DAO family. As to quaternary structure, monomer. FAD is required as a cofactor.

Probably functions as a FAD-dependent oxidoreductase, whose physiological substrate is unknown. Does not display amino-acid oxidase or glycerol-3-phosphate dehydrogenase activities. Is essential for growth of P.aeruginosa in the sputum of cystic fibrosis patients. This Pseudomonas aeruginosa (strain ATCC 15692 / DSM 22644 / CIP 104116 / JCM 14847 / LMG 12228 / 1C / PRS 101 / PAO1) protein is Probable FAD-dependent oxidoreductase PA4991.